Consider the following 422-residue polypeptide: Golgi-associated RAB2 interactor protein 2 (422 aa).

The interval 353 to 404 (PVESEANTSKEMKDKTSEEKMPDFQSTALKAEESRSLRTESNTSVLSPHIKS) is disordered. Basic and acidic residues predominate over residues 360–374 (TSKEMKDKTSEEKMP).

It belongs to the GARIN family. In terms of assembly, interacts with CALM1. In terms of tissue distribution, expressed in spermatozoa (at protein level).

Its subcellular location is the cell projection. It is found in the cilium. The protein localises to the flagellum. Seems to play a role in sperm motility. The protein is Golgi-associated RAB2 interactor protein 2 of Homo sapiens (Human).